The following is a 370-amino-acid chain: Gap junction delta-4 protein (370 aa).

At 1 to 19 the chain is on the cytoplasmic side; it reads MEGVDLLGFLIITLNCNVT. The chain crosses the membrane as a helical span at residues 20 to 40; it reads MVGKLWFVLTMLLRMLVIVLA. Over 41-76 the chain is Extracellular; that stretch reads GRPVYQDEQERFVCNTLQPGCANVCYDVFSPVSHLR. A helical membrane pass occupies residues 77-97; that stretch reads FWLIQGVCVLLPSAVFSVYVL. Over 98 to 146 the chain is Cytoplasmic; the sequence is HRGATLAALGPRRCPDPREPASGQRRCPRPFGERGGLQVPDFSAGYIIH. Residues 147-167 traverse the membrane as a helical segment; that stretch reads LLLRTLLEAAFGALHYFLFGF. The Extracellular segment spans residues 168 to 196; it reads LAPKKFPCTRPPCTGVVDCYVSRPTEKSL. Residues 197–217 traverse the membrane as a helical segment; sequence LMLFLWAVSALSFLLGLADLV. At 218–370 the chain is on the cytoplasmic side; it reads CSLRRRMRRR…HLRARKSEWV (153 aa). Residues 224-370 are disordered; the sequence is MRRRPGPPTS…HLRARKSEWV (147 aa). Residues 246-260 are compositionally biased toward basic and acidic residues; it reads AEGRRTDEEGGREEE. Over residues 331 to 346 the composition is skewed to low complexity; the sequence is PSAAPSRLAAPPSCSS.

The protein belongs to the connexin family. Delta-type subfamily. In terms of assembly, a connexon is composed of a hexamer of connexins. Expressed in pancreas, kidney, skeletal muscle, liver, placenta, and heart.

Its subcellular location is the cell membrane. The protein resides in the cell junction. It localises to the gap junction. Functionally, one gap junction consists of a cluster of closely packed pairs of transmembrane channels, the connexons, through which materials of low MW diffuse from one cell to a neighboring cell. In Homo sapiens (Human), this protein is Gap junction delta-4 protein (GJD4).